The chain runs to 154 residues: 6,7-dimethyl-8-ribityllumazine synthase (154 aa).

5-amino-6-(D-ribitylamino)uracil contacts are provided by residues tryptophan 22, 56–58 (AWE), and 80–82 (CVV). 85–86 (DT) serves as a coordination point for (2S)-2-hydroxy-3-oxobutyl phosphate. Histidine 88 (proton donor) is an active-site residue. Asparagine 113 serves as a coordination point for 5-amino-6-(D-ribitylamino)uracil. A (2S)-2-hydroxy-3-oxobutyl phosphate-binding site is contributed by arginine 127.

The protein belongs to the DMRL synthase family. Forms an icosahedral capsid composed of 60 subunits, arranged as a dodecamer of pentamers.

It carries out the reaction (2S)-2-hydroxy-3-oxobutyl phosphate + 5-amino-6-(D-ribitylamino)uracil = 6,7-dimethyl-8-(1-D-ribityl)lumazine + phosphate + 2 H2O + H(+). Its pathway is cofactor biosynthesis; riboflavin biosynthesis; riboflavin from 2-hydroxy-3-oxobutyl phosphate and 5-amino-6-(D-ribitylamino)uracil: step 1/2. In terms of biological role, catalyzes the formation of 6,7-dimethyl-8-ribityllumazine by condensation of 5-amino-6-(D-ribitylamino)uracil with 3,4-dihydroxy-2-butanone 4-phosphate. This is the penultimate step in the biosynthesis of riboflavin. This is 6,7-dimethyl-8-ribityllumazine synthase from Xylella fastidiosa (strain M23).